The chain runs to 342 residues: Cathepsin B-like cysteine proteinase (342 aa).

A signal peptide spans 1 to 17 (MLKIAVYIVSLFTFLEA). The propeptide at 18 to 89 (HVTTRNNQRI…TVDHHDLNVE (72 aa)) is activation peptide. Disulfide bonds link cysteine 103–cysteine 132, cysteine 115–cysteine 159, cysteine 151–cysteine 217, cysteine 152–cysteine 155, cysteine 188–cysteine 221, and cysteine 196–cysteine 207. Cysteine 118 is a catalytic residue. Active-site residues include histidine 288 and asparagine 308.

It belongs to the peptidase C1 family. As to expression, intestine (gut).

Thiol protease. Has a role as a digestive enzyme. The chain is Cathepsin B-like cysteine proteinase (CATB) from Schistosoma japonicum (Blood fluke).